A 347-amino-acid polypeptide reads, in one-letter code: Eukaryotic translation initiation factor 3 subunit I (347 aa).

WD repeat units lie at residues 8–47 (GHER…RLGT), 50–89 (GHTG…CVAT), 149–190 (THEG…EYVD), 194–233 (LHEK…VLKK), and 291–330 (GHFG…FDFK). S302 bears the Phosphoserine mark.

The protein belongs to the eIF-3 subunit I family. Component of the eukaryotic translation initiation factor 3 (eIF-3) complex.

It localises to the cytoplasm. Functionally, component of the eukaryotic translation initiation factor 3 (eIF-3) complex, which is involved in protein synthesis of a specialized repertoire of mRNAs and, together with other initiation factors, stimulates binding of mRNA and methionyl-tRNAi to the 40S ribosome. The eIF-3 complex specifically targets and initiates translation of a subset of mRNAs involved in cell proliferation. This chain is Eukaryotic translation initiation factor 3 subunit I, found in Saccharomyces cerevisiae (strain YJM789) (Baker's yeast).